The primary structure comprises 325 residues: Gamma-hemolysin component B (325 aa).

The first 26 residues, 1–26 (MKMNKLVKSSVATSMALLLLSGTANA), serve as a signal peptide directing secretion.

Belongs to the aerolysin family. In terms of assembly, toxicity requires sequential binding and synergistic association of a class S and a class F component which form heterooligomeric complexes. HlgB (class F) associates with either hlgA thus forming an AB toxin or with hlgC thus forming a CB toxin. Interacts with host AMFR.

It is found in the secreted. Its function is as follows. Toxin that seems to act by forming pores in the membrane of the cell. Has a hemolytic and a leucotoxic activity. Promotes host AMFR-mediated inflammation by mediating 'Lys-27'-linked ubiquitination of TAB3, TAK1-TAB3 complex formation and phosphorylation of TAK1/MAP3K7. In turn, activates host NF-kappa-B signaling pathway. This is Gamma-hemolysin component B (hlgB) from Staphylococcus aureus (strain NCTC 8325 / PS 47).